We begin with the raw amino-acid sequence, 441 residues long: POC1 centriolar protein homolog A (441 aa).

7 WD repeats span residues 16-55, 58-97, 100-139, 142-181, 184-223, 226-265, and 268-307; these read GHRDTVTTVDFNPNTKQLASGSMDSCLMIWNMKPQMRAYR, GHKDAILSVDFSPSGHLIASASRDKTVRLWVPSVKGESTV, AHTGTVRSVSFSGDGQSLVTASDDKTIKVWTVHRQKFLFS, QHINWVRCAKFSPDGRLIVSASDDKTIKLWDKTSRECIHS, EHGGFVNFVDFHPSGTCIAAAATDNTVKVWDIRMNKLIQH, VHSGVVNSLSFHPSGNYLITASNDSTLKVLDLLEGRLLYT, and GHQGPVTSVKFSREGEFFASGGSDEQVMVWKTNFDSASYA. Residues 323-380 form a disordered region; the sequence is DYTSGVPAADRHRPERNAQTDQADDLEPRHIQMSAKDRSSPLSYTSRSIDQHHPQAED. Composition is skewed to basic and acidic residues over residues 331-340, 348-361, and 371-380; these read ADRHRPERNA, LEPRHIQMSAKDRS, and IDQHHPQAED. Residues 400-427 adopt a coiled-coil conformation; it reads LTRTVGILEQRLSLTEDKLKECIDNQQA.

Belongs to the WD repeat POC1 family. As to quaternary structure, interacts with pat.

Its subcellular location is the cytoplasm. It localises to the cytoskeleton. Functionally, may play an important role in centriole assembly and/or stability and ciliogenesis. The protein is POC1 centriolar protein homolog A (poc1a) of Xenopus tropicalis (Western clawed frog).